The following is a 670-amino-acid chain: Putative segment polarity protein dishevelled homolog DVL1P1 (670 aa).

One can recognise a DIX domain in the interval 1 to 85; that stretch reads MAETKIIYHM…RVVSWLVLVE (85 aa). The disordered stretch occupies residues 89–240; sequence SDAGSQGTDS…ADRASSFSSM (152 aa). Basic residues predominate over residues 142 to 151; it reads SHRRDRARRR. The segment covering 152-171 has biased composition (basic and acidic residues); it reads NREEAARTNGHPRGDRRRDV. Low complexity-rich tracts occupy residues 176 to 192 and 201 to 214; these read DSAS…SSFV and SRLS…TSSR. Over residues 215–228 the composition is skewed to basic residues; it reads LIRKHKRRRRKQRL. The PDZ domain maps to 251-323; that stretch reads TVTLNMERHH…NDDAVRVLRE (73 aa). The DEP domain maps to 400 to 474; sequence PDSGLEIRDR…SEQCYYVFGD (75 aa). A disordered region spans residues 518–642; the sequence is PGPPPCFPPA…PGGPPVRELA (125 aa). 2 stretches are compositionally biased toward low complexity: residues 526–553 and 600–614; these read PAYQ…SSGS and SRGS…SYAP.

It belongs to the DSH family. Expressed in thymus, heart, liver, kidney, brain, skeletal muscle, and pancreas.

The protein resides in the cytoplasm. In terms of biological role, may play a role in the signal transduction pathway mediated by multiple Wnt genes. The polypeptide is Putative segment polarity protein dishevelled homolog DVL1P1 (DVL1P1) (Homo sapiens (Human)).